A 208-amino-acid polypeptide reads, in one-letter code: Large ribosomal subunit protein uL3 (208 aa).

Residues 123–147 (RHGQSRGPMAHGSRYHRRPGSMGPV) are disordered.

This sequence belongs to the universal ribosomal protein uL3 family. Part of the 50S ribosomal subunit. Forms a cluster with proteins L14 and L19.

Functionally, one of the primary rRNA binding proteins, it binds directly near the 3'-end of the 23S rRNA, where it nucleates assembly of the 50S subunit. The sequence is that of Large ribosomal subunit protein uL3 from Streptococcus gordonii (strain Challis / ATCC 35105 / BCRC 15272 / CH1 / DL1 / V288).